The sequence spans 460 residues: ATP synthase subunit beta (460 aa).

ATP is bound at residue 148 to 155 (GGAGVGKT).

This sequence belongs to the ATPase alpha/beta chains family. As to quaternary structure, F-type ATPases have 2 components, CF(1) - the catalytic core - and CF(0) - the membrane proton channel. CF(1) has five subunits: alpha(3), beta(3), gamma(1), delta(1), epsilon(1). CF(0) has three main subunits: a(1), b(2) and c(9-12). The alpha and beta chains form an alternating ring which encloses part of the gamma chain. CF(1) is attached to CF(0) by a central stalk formed by the gamma and epsilon chains, while a peripheral stalk is formed by the delta and b chains.

The protein resides in the cell inner membrane. It carries out the reaction ATP + H2O + 4 H(+)(in) = ADP + phosphate + 5 H(+)(out). In terms of biological role, produces ATP from ADP in the presence of a proton gradient across the membrane. The catalytic sites are hosted primarily by the beta subunits. The polypeptide is ATP synthase subunit beta (Alcanivorax borkumensis (strain ATCC 700651 / DSM 11573 / NCIMB 13689 / SK2)).